Consider the following 146-residue polypeptide: 1,4-dihydroxy-2-naphthoyl-CoA hydrolase (146 aa).

D19 is an active-site residue.

Belongs to the 4-hydroxybenzoyl-CoA thioesterase family. DHNA-CoA hydrolase subfamily.

The catalysed reaction is 1,4-dihydroxy-2-naphthoyl-CoA + H2O = 1,4-dihydroxy-2-naphthoate + CoA + H(+). It functions in the pathway cofactor biosynthesis; phylloquinone biosynthesis. It participates in quinol/quinone metabolism; 1,4-dihydroxy-2-naphthoate biosynthesis; 1,4-dihydroxy-2-naphthoate from chorismate: step 7/7. Functionally, catalyzes the hydrolysis of 1,4-dihydroxy-2-naphthoyl-CoA (DHNA-CoA) to 1,4-dihydroxy-2-naphthoate (DHNA), a reaction involved in phylloquinone (vitamin K1) biosynthesis. The polypeptide is 1,4-dihydroxy-2-naphthoyl-CoA hydrolase (Thermosynechococcus vestitus (strain NIES-2133 / IAM M-273 / BP-1)).